The chain runs to 189 residues: Elongation factor P (189 aa).

This sequence belongs to the elongation factor P family.

Its subcellular location is the cytoplasm. The protein operates within protein biosynthesis; polypeptide chain elongation. In terms of biological role, involved in peptide bond synthesis. Stimulates efficient translation and peptide-bond synthesis on native or reconstituted 70S ribosomes in vitro. Probably functions indirectly by altering the affinity of the ribosome for aminoacyl-tRNA, thus increasing their reactivity as acceptors for peptidyl transferase. This is Elongation factor P from Ehrlichia ruminantium (strain Gardel).